A 199-amino-acid polypeptide reads, in one-letter code: Phosphatidylethanolamine N-methyltransferase (199 aa).

Residues 1-12 (MSWLLGYMDPTE) lie on the Lumenal side of the membrane. The helical intramembrane region spans 13–33 (PSFVAAVITIVFNPLFWNVVA). Topologically, residues 34 to 45 (RWEQRTRKLSRA) are lumenal. A helical transmembrane segment spans residues 46-66 (FGSPHLACYSLGICILLLNIL). The Cytoplasmic portion of the chain corresponds to 67–93 (RSHCFTQAMMSQPKMEGLDNHTTYFLG). A helical transmembrane segment spans residues 94 to 114 (LAFLGWGFVFVLSSFYALGFT). 98 to 100 (GWG) serves as a coordination point for S-adenosyl-L-methionine. Residues 115–157 (GTFLGDYFGILKESRVTTFPFSVLDNPMYWGSTANYLGWALMH) lie on the Lumenal side of the membrane. The helical transmembrane segment at 158-178 (ASPTGLLLTVLVAIVYVVALL) threads the bilayer. The Cytoplasmic portion of the chain corresponds to 179–199 (YEEPFTAEIYRQKATRLHKRS). Position 180–181 (180–181 (EE)) interacts with S-adenosyl-L-methionine.

This sequence belongs to the class VI-like SAM-binding methyltransferase superfamily. PEMT/PEM2 methyltransferase family. In terms of tissue distribution, expressed in liver (at protein level).

The protein localises to the endoplasmic reticulum membrane. It is found in the mitochondrion membrane. It carries out the reaction a 1,2-diacyl-sn-glycero-3-phospho-N-methylethanolamine + S-adenosyl-L-methionine = a 1,2-diacyl-sn-glycero-3-phospho-N,N-dimethylethanolamine + S-adenosyl-L-homocysteine + H(+). It catalyses the reaction a 1,2-diacyl-sn-glycero-3-phospho-N,N-dimethylethanolamine + S-adenosyl-L-methionine = a 1,2-diacyl-sn-glycero-3-phosphocholine + S-adenosyl-L-homocysteine + H(+). The catalysed reaction is a 1,2-diacyl-sn-glycero-3-phosphoethanolamine + S-adenosyl-L-methionine = a 1,2-diacyl-sn-glycero-3-phospho-N-methylethanolamine + S-adenosyl-L-homocysteine + H(+). The enzyme catalyses 1,2-di-(9Z-octadecenoyl)-sn-glycero-3-phosphoethanolamine + S-adenosyl-L-methionine = 1,2-di-(9Z-octadecenoyl)-sn-glycero-3-phospho-N-methylethanolamine + S-adenosyl-L-homocysteine + H(+). It carries out the reaction 1,2-di-(9Z-octadecenoyl)-sn-glycero-3-phospho-N-methylethanolamine + S-adenosyl-L-methionine = 1,2-di-(9Z-octadecenoyl)-sn-glycero-3-phospho-N,N-dimethylethanolamine + S-adenosyl-L-homocysteine + H(+). It catalyses the reaction 1,2-di-(9Z-octadecenoyl)-sn-glycero-3-phospho-N,N-dimethylethanolamine + S-adenosyl-L-methionine = 1,2-di-(9Z-octadecenoyl)-sn-glycero-3-phosphocholine + S-adenosyl-L-homocysteine + H(+). The catalysed reaction is 1,2-di-(9Z,12Z-octadecadienoyl)-sn-glycero-3-phosphoethanolamine + S-adenosyl-L-methionine = 1,2-di-(9Z,12Z-octadecadienoyl)-sn-glycero-3-phospho-N-methylethanolamine + S-adenosyl-L-homocysteine + H(+). The enzyme catalyses 1,2-di-(9Z,12Z-octadecadienoyl)-sn-glycero-3-phospho-N-methylethanolamine + S-adenosyl-L-methionine = 1,2-di-(9Z,12Z-octadecadienoyl)-sn-glycero-3-phospho-N,N-dimethylethanolamine + S-adenosyl-L-homocysteine + H(+). It carries out the reaction 1,2-di-(9Z,12Z-octadecadienoyl)-sn-glycero-3-phospho-N,N-dimethylethanolamine + S-adenosyl-L-methionine = 1,2-di-(9Z,12Z-octadecadienoyl)-sn-glycero-3-phosphocholine + S-adenosyl-L-homocysteine + H(+). It catalyses the reaction 1,2-di-(9Z,12Z,15Z-octadecatrienoyl)-sn-glycero-3-phosphoethanolamine + S-adenosyl-L-methionine = 1,2-di-(9Z,12Z,15Z-octadecatrienoyl)-sn-glycero-3-phospho-N-methylethanolamine + S-adenosyl-L-homocysteine + H(+). The catalysed reaction is 1,2-di-(9Z,12Z,15Z-octadecatrienoyl)-sn-glycero-3-phospho-N-methylethanolamine + S-adenosyl-L-methionine = 1,2-di-(9Z,12Z,15Z-octadecatrienoyl)-sn-glycero-3-phospho-N,N-dimethylethanolamine + S-adenosyl-L-homocysteine + H(+). The enzyme catalyses 1,2-di-(9Z,12Z,15Z-octadecatrienoyl)-sn-glycero-3-phospho-N,N-dimethylethanolamine + S-adenosyl-L-methionine = 1,2-di-(9Z,12Z,15Z-octadecatrienoyl)-sn-glycero-3-phosphocholine + S-adenosyl-L-homocysteine + H(+). It carries out the reaction 1-hexadecanoyl-2-(4Z,7Z,10Z,13Z,16Z,19Z-docosahexaenoyl)-sn-glycero-3-phosphoethanolamine + S-adenosyl-L-methionine = 1-hexadecanoyl-2-(4Z,7Z,10Z,13Z,16Z,19Z-docosahexaenoyl)-sn-glycero-3-phospho-N-methylethanolamine + S-adenosyl-L-homocysteine + H(+). It catalyses the reaction 1-hexadecanoyl-2-(4Z,7Z,10Z,13Z,16Z,19Z-docosahexaenoyl)-sn-glycero-3-phospho-N-methylethanolamine + S-adenosyl-L-methionine = 1-hexadecanoyl-2-(4Z,7Z,10Z,13Z,16Z,19Z-docosahexaenoyl)-sn-glycero-3-phospho-N,N-dimethylethanolamine + S-adenosyl-L-homocysteine + H(+). The catalysed reaction is 1-hexadecanoyl-2-(4Z,7Z,10Z,13Z,16Z,19Z-docosahexaenoyl)-sn-glycero-3-phospho-N,N-dimethylethanolamine + S-adenosyl-L-methionine = 1-hexadecanoyl-2-(4Z,7Z,10Z,13Z,16Z,19Z-docosahexaenoyl)-sn-glycero-3-phosphocholine + S-adenosyl-L-homocysteine + H(+). The protein operates within phospholipid metabolism; phosphatidylcholine biosynthesis. In terms of biological role, catalyzes the three sequential steps of the methylation pathway for the biosynthesis of phosphatidylcholine, a critical and essential component for membrane structure. Uses S-adenosylmethionine (S-adenosyl-L-methionine, SAM or AdoMet) as the methyl group donor for the methylation of phosphatidylethanolamine (1,2-diacyl-sn-glycero-3-phosphoethanolamine, PE) to phosphatidylmonomethylethanolamine (1,2-diacyl-sn-glycero-3-phospho-N-methylethanolamine, PMME), PMME to phosphatidyldimethylethanolamine (1,2-diacyl-sn-glycero-3-phospho-N,N-dimethylethanolamine, PDME), and PDME to phosphatidylcholine (1,2-diacyl-sn-glycero-3-phosphocholine, PC), producing S-adenosyl-L-homocysteine in each step. In Mus musculus (Mouse), this protein is Phosphatidylethanolamine N-methyltransferase.